Here is a 582-residue protein sequence, read N- to C-terminus: 2-succinyl-5-enolpyruvyl-6-hydroxy-3-cyclohexene-1-carboxylate synthase (582 aa).

The protein belongs to the TPP enzyme family. MenD subfamily. Homodimer. Requires Mg(2+) as cofactor. The cofactor is Mn(2+). Thiamine diphosphate serves as cofactor.

The enzyme catalyses isochorismate + 2-oxoglutarate + H(+) = 5-enolpyruvoyl-6-hydroxy-2-succinyl-cyclohex-3-ene-1-carboxylate + CO2. Its pathway is quinol/quinone metabolism; 1,4-dihydroxy-2-naphthoate biosynthesis; 1,4-dihydroxy-2-naphthoate from chorismate: step 2/7. The protein operates within cofactor biosynthesis; phylloquinone biosynthesis. Catalyzes the thiamine diphosphate-dependent decarboxylation of 2-oxoglutarate and the subsequent addition of the resulting succinic semialdehyde-thiamine pyrophosphate anion to isochorismate to yield 2-succinyl-5-enolpyruvyl-6-hydroxy-3-cyclohexene-1-carboxylate (SEPHCHC). The protein is 2-succinyl-5-enolpyruvyl-6-hydroxy-3-cyclohexene-1-carboxylate synthase of Prochlorococcus marinus (strain MIT 9313).